The primary structure comprises 371 residues: Cytochrome b (371 aa).

Transmembrane regions (helical) follow at residues 32–52, 76–98, 113–133, and 179–199; these read VGFS…CLAW, FVIR…VHIF, VWAV…IGYV, and LHVL…MHLF. Heme b is bound by residues His82 and His96. 2 residues coordinate heme b: His183 and His197. His202 is an a ubiquinone binding site. A run of 4 helical transmembrane segments spans residues 227–247, 296–316, 329–349, and 350–370; these read FYLR…YFIF, LMVI…LWFV, LILF…ILAY, and PIWM…VCRL.

This sequence belongs to the cytochrome b family. As to quaternary structure, the main subunits of complex b-c1 are: cytochrome b, cytochrome c1 and the Rieske protein. It depends on heme b as a cofactor.

It is found in the mitochondrion inner membrane. In terms of biological role, component of the ubiquinol-cytochrome c reductase complex (complex III or cytochrome b-c1 complex) that is part of the mitochondrial respiratory chain. The b-c1 complex mediates electron transfer from ubiquinol to cytochrome c. Contributes to the generation of a proton gradient across the mitochondrial membrane that is then used for ATP synthesis. In Leishmania tarentolae (Sauroleishmania tarentolae), this protein is Cytochrome b (MT-CYB).